Reading from the N-terminus, the 449-residue chain is Cortexillin-2 (449 aa).

The tract at residues methionine 1 to alanine 231 is actin-binding. 2 consecutive Calponin-homology (CH) domains span residues lysine 10–arginine 119 and lysine 128–arginine 233. Coiled-coil stretches lie at residues tyrosine 232–leucine 364 and glutamine 408–alanine 441.

The protein belongs to the cortexillin family. As to quaternary structure, homodimer; parallel.

Its subcellular location is the cytoplasm. The protein localises to the cytoskeleton. Its function is as follows. Actin-bundling protein. When linked to F-actin the actin filaments form preferentially anti-parallel bundles that associate into meshworks. Plays a major role in cytokinesis. The polypeptide is Cortexillin-2 (ctxB) (Heterostelium pallidum (strain ATCC 26659 / Pp 5 / PN500) (Cellular slime mold)).